A 128-amino-acid chain; its full sequence is Small ribosomal subunit protein uS11 (128 aa).

It belongs to the universal ribosomal protein uS11 family. Part of the 30S ribosomal subunit. Interacts with proteins S7 and S18. Binds to IF-3.

In terms of biological role, located on the platform of the 30S subunit, it bridges several disparate RNA helices of the 16S rRNA. Forms part of the Shine-Dalgarno cleft in the 70S ribosome. This is Small ribosomal subunit protein uS11 from Synechococcus sp. (strain JA-3-3Ab) (Cyanobacteria bacterium Yellowstone A-Prime).